The chain runs to 119 residues: NADH-quinone oxidoreductase subunit A (119 aa).

3 helical membrane passes run 9–29 (VLLF…LGYV), 63–83 (LVAI…PWAV), and 88–108 (VGMA…VGFA).

It belongs to the complex I subunit 3 family. As to quaternary structure, NDH-1 is composed of 14 different subunits. Subunits NuoA, H, J, K, L, M, N constitute the membrane sector of the complex.

The protein resides in the cell inner membrane. It catalyses the reaction a quinone + NADH + 5 H(+)(in) = a quinol + NAD(+) + 4 H(+)(out). Functionally, NDH-1 shuttles electrons from NADH, via FMN and iron-sulfur (Fe-S) centers, to quinones in the respiratory chain. The immediate electron acceptor for the enzyme in this species is believed to be ubiquinone. Couples the redox reaction to proton translocation (for every two electrons transferred, four hydrogen ions are translocated across the cytoplasmic membrane), and thus conserves the redox energy in a proton gradient. The protein is NADH-quinone oxidoreductase subunit A of Verminephrobacter eiseniae (strain EF01-2).